Consider the following 3080-residue polypeptide: Protein PIEZO homolog (3080 aa).

6 helical membrane-spanning segments follow: residues 28–48, 57–77, 86–106, 113–133, 204–224, and 232–252; these read YIYF…SLIL, PIIT…VNVV, LSVN…WIVF, VIVF…LVYP, YPSI…LLLA, and VMLK…LFVY. N-linked (GlcNAc...) asparagine glycosylation occurs at Asn276. The chain crosses the membrane as a helical span at residues 285-305; that stretch reads WPLVIGYITVLLLYISTCILF. Asn312 and Asn339 each carry an N-linked (GlcNAc...) asparagine glycan. Helical transmembrane passes span 362-382 and 396-416; these read ILVV…LASG and VIYI…IFNI. Asn434 is a glycosylation site (N-linked (GlcNAc...) asparagine). The helical transmembrane segment at 438-458 threads the bilayer; it reads WLYIGVQIVVSLTLSLYCFYS. A disordered region spans residues 469 to 548; sequence KKDQQSQQSQ…GGGIIRPRKP (80 aa). The span at 473 to 505 shows a compositional bias: low complexity; that stretch reads QSQQSQPQPQQQQQQQQSSQNNQIQQSPLQYQQ. Residues 512–532 are compositionally biased toward polar residues; the sequence is ISNKSLPSSPMSTKSTTVHIQ. N-linked (GlcNAc...) asparagine glycans are attached at residues Asn514, Asn567, and Asn606. 3 consecutive transmembrane segments (helical) span residues 672-692, 700-720, and 740-760; these read GLTS…VFVI, FWMC…IWQL, and YGSP…FSII. A glycan (N-linked (GlcNAc...) asparagine) is linked at Asn795. 3 helical membrane-spanning segments follow: residues 827–847, 849–869, and 872–892; these read FCYL…INIV, MATV…SIHI, and FWII…IMQF. Asn918 carries an N-linked (GlcNAc...) asparagine glycan. A helical membrane pass occupies residues 928-948; that stretch reads LFGCSSILVVCVFQLTVFFSI. Residue Asn992 is glycosylated (N-linked (GlcNAc...) asparagine). A run of 2 helical transmembrane segments spans residues 1036 to 1056 and 1067 to 1087; these read FAIS…MIVI and IGSF…AALL. Asn1109 carries an N-linked (GlcNAc...) asparagine glycan. The segment at 1158–1185 is disordered; it reads QQQRKLEEHEEEYEEEEDQFGNKKNNDK. Residues 1166-1176 show a composition bias toward acidic residues; sequence HEEEYEEEEDQ. N-linked (GlcNAc...) asparagine glycans are attached at residues Asn1191, Asn1240, and Asn1251. The segment at 1199-1253 is disordered; that stretch reads DDGNNNNNNNNNNNNNNNNNNNNNNNNNNNNNNNNNNNNNNNQSNNENNENNNNS. Positions 1202-1252 are enriched in low complexity; the sequence is NNNNNNNNNNNNNNNNNNNNNNNNNNNNNNNNNNNNNNNQSNNENNENNNN. Helical transmembrane passes span 1281–1301, 1316–1336, and 1360–1380; these read VLAF…LIII, IYVS…ILVV, and LLLL…VLFF. Asn1424 and Asn1440 each carry an N-linked (GlcNAc...) asparagine glycan. Transmembrane regions (helical) follow at residues 1472-1492 and 1519-1539; these read VILI…SCFY and IYNW…ILYF. Asn1559 and Asn1589 each carry an N-linked (GlcNAc...) asparagine glycan. The helical transmembrane segment at 1619-1639 threads the bilayer; the sequence is IETGPLSISTISDVIIMVLLA. A compositionally biased stretch (basic residues) spans 1704–1714; it reads RINRRKNRHNH. Positions 1704 to 1812 are disordered; sequence RINRRKNRHN…NPLSNSSSTV (109 aa). Positions 1715-1742 are enriched in low complexity; the sequence is YYNNNPNNNYNNNNNNNNSNSSNSNNNN. Residues Asn1731, Asn1734, Asn1763, Asn1768, Asn1771, Asn1779, Asn1807, and Asn1864 are each glycosylated (N-linked (GlcNAc...) asparagine). A compositionally biased stretch (polar residues) spans 1762–1782; the sequence is KNTTNQNATNSTYSPFANSTM. Positions 1789–1812 are enriched in low complexity; it reads NNNNNNNNNNNFNNNPLSNSSSTV. 2 disordered regions span residues 1873–1899 and 1958–2032; these read LQQE…SSKE and SQLL…TSSS. Low complexity predominate over residues 1958–2021; that stretch reads SQLLQQQQQQ…NNNNNNNNNN (64 aa). The N-linked (GlcNAc...) asparagine glycan is linked to Asn2027. Transmembrane regions (helical) follow at residues 2078–2098 and 2112–2132; these read IANG…AVFL and FWRF…VFQI. A glycan (N-linked (GlcNAc...) asparagine) is linked at Asn2148. A helical transmembrane segment spans residues 2199-2219; it reads VFGLYIIDGHFISGAFWDLAI. The segment at 2277–2367 is disordered; that stretch reads LNNSPISLNS…NNNNNNNNNN (91 aa). N-linked (GlcNAc...) asparagine glycosylation occurs at Asn2285. Residues 2288-2367 are compositionally biased toward low complexity; the sequence is NNNNNNNNNN…NNNNNNNNNN (80 aa). The next 2 helical transmembrane spans lie at 2427-2447 and 2457-2477; these read IIIY…WLAI and YYMP…IFPQ. N-linked (GlcNAc...) asparagine glycosylation occurs at Asn2478. The next 4 membrane-spanning stretches (helical) occupy residues 2500 to 2520, 2530 to 2550, 2553 to 2573, and 2671 to 2691; these read YIVI…IYLY, QIVL…DLIV, FSFG…IYLY, and FVTG…PLII. Residues Asn2762, Asn2790, Asn2837, Asn2840, Asn2848, Asn2858, Asn2908, Asn2913, and Asn2935 are each glycosylated (N-linked (GlcNAc...) asparagine). The disordered stretch occupies residues 2835–2863; sequence QSNNSNNSNNPNENSSSGSDDNNNNSNNN. The span at 2836–2863 shows a compositional bias: low complexity; the sequence is SNNSNNSNNPNENSSSGSDDNNNNSNNN. A helical membrane pass occupies residues 2955–2975; the sequence is ITSTLVSAGIIGLYVSVVLSV. The disordered stretch occupies residues 3054 to 3080; sequence PTINSTLNNQNNQNNNNNNNNNHEKIN. N-linked (GlcNAc...) asparagine glycosylation is present at Asn3057. Positions 3061–3074 are enriched in low complexity; sequence NNQNNQNNNNNNNN.

This sequence belongs to the PIEZO (TC 1.A.75) family.

The protein localises to the membrane. This is Protein PIEZO homolog from Dictyostelium discoideum (Social amoeba).